Here is a 465-residue protein sequence, read N- to C-terminus: tRNA-2-methylthio-N(6)-dimethylallyladenosine synthase (465 aa).

Residues 26 to 141 enclose the MTTase N-terminal domain; it reads MRAHIITYGC…LPEALKANER (116 aa). [4Fe-4S] cluster contacts are provided by Cys-35, Cys-71, Cys-104, Cys-173, Cys-177, and Cys-180. Residues 159-388 enclose the Radical SAM core domain; it reads PKGALSAHVT…IEKQKEWSYR (230 aa). The TRAM domain occupies 391 to 453; sequence LEWVGKTVEV…PHLLFGEVVG (63 aa).

It belongs to the methylthiotransferase family. MiaB subfamily. In terms of assembly, monomer. Requires [4Fe-4S] cluster as cofactor.

Its subcellular location is the cytoplasm. It carries out the reaction N(6)-dimethylallyladenosine(37) in tRNA + (sulfur carrier)-SH + AH2 + 2 S-adenosyl-L-methionine = 2-methylsulfanyl-N(6)-dimethylallyladenosine(37) in tRNA + (sulfur carrier)-H + 5'-deoxyadenosine + L-methionine + A + S-adenosyl-L-homocysteine + 2 H(+). Its function is as follows. Catalyzes the methylthiolation of N6-(dimethylallyl)adenosine (i(6)A), leading to the formation of 2-methylthio-N6-(dimethylallyl)adenosine (ms(2)i(6)A) at position 37 in tRNAs that read codons beginning with uridine. This is tRNA-2-methylthio-N(6)-dimethylallyladenosine synthase from Thermus thermophilus (strain ATCC 27634 / DSM 579 / HB8).